Here is a 358-residue protein sequence, read N- to C-terminus: Protein-glutamate methylesterase/protein-glutamine glutaminase 2 (358 aa).

One can recognise a Response regulatory domain in the interval S7–E124. D58 carries the post-translational modification 4-aspartylphosphate. In terms of domain architecture, CheB-type methylesterase spans A170 to R358. Catalysis depends on residues S182, H208, and D304.

It belongs to the CheB family. Phosphorylated by CheA. Phosphorylation of the N-terminal regulatory domain activates the methylesterase activity.

It is found in the cytoplasm. The enzyme catalyses [protein]-L-glutamate 5-O-methyl ester + H2O = L-glutamyl-[protein] + methanol + H(+). The catalysed reaction is L-glutaminyl-[protein] + H2O = L-glutamyl-[protein] + NH4(+). Functionally, involved in chemotaxis. Part of a chemotaxis signal transduction system that modulates chemotaxis in response to various stimuli. Catalyzes the demethylation of specific methylglutamate residues introduced into the chemoreceptors (methyl-accepting chemotaxis proteins or MCP) by CheR. Also mediates the irreversible deamidation of specific glutamine residues to glutamic acid. The chain is Protein-glutamate methylesterase/protein-glutamine glutaminase 2 from Pseudomonas syringae pv. tomato (strain ATCC BAA-871 / DC3000).